Reading from the N-terminus, the 237-residue chain is RNA-binding protein 38 (237 aa).

Residues 1 to 24 (MLLQPACSPSVFPRPSAAPSAMHG) are disordered. The region spanning 32-109 (TKIFVGGLPY…RKANVNLAYL (78 aa)) is the RRM domain.

The protein belongs to the RBM38 family. As to expression, expressed in cardiac and skeletal muscle tissues.

Its subcellular location is the cytoplasm. It localises to the cytosol. The protein localises to the nucleus. RNA-binding protein that specifically bind the 3'-UTR of CDKN1A transcripts, leading to maintain the stability of CDKN1A transcripts, thereby acting as a mediator of the p53/TP53 family to regulate CDKN1A. CDKN1A is a cyclin-dependent kinase inhibitor transcriptionally regulated by the p53/TP53 family to induce cell cycle arrest. Has the ability to induce cell cycle arrest in G1 and maintain the stability of CDKN1A transcripts induced by p53/TP53. Also acts as a mRNA splicing factor. Specifically regulates the expression of FGFR2-IIIb, an epithelial cell-specific isoform of FGFR2. Plays a role in myogenic differentiation. The chain is RNA-binding protein 38 (Rbm38) from Mus musculus (Mouse).